The primary structure comprises 1522 residues: Myosin-15 (1522 aa).

A Myosin N-terminal SH3-like domain is found at 12-61; that stretch reads RKGDKVWVEDKDLAWIAADVLDSFDNKLHVETSTGKKVFVSPEKLFRRDP. The Myosin motor domain occupies 67-737; it reads NGVDDMTKLT…QIGILDSRRA (671 aa). Residues 161–168 and 214–222 each bind ATP; these read GESGAGKT and NDNSSRFGK. Actin-binding stretches follow at residues 499–533, 535–558, 593–618, and 618–640; these read LIEK…FQNF, FHPR…AGKV, FPSA…KQQL, and LQAL…KPNS. IQ domains are found at residues 763-792, 788-817, 811-840, 836-865, and 859-888; these read ARAS…AAAA, NAAA…AAIV, LVSA…HRAA, EHRA…SIIA, and RQSS…VANE. Residues 889–1059 are a coiled coil; sequence AGALRLAKTK…NQVLMQKTLI (171 aa). In terms of domain architecture, Dilute spans 1164-1456; it reads NIIIEGINEA…VSQMRVLVDK (293 aa).

Belongs to the TRAFAC class myosin-kinesin ATPase superfamily. Myosin family. Plant myosin class XI subfamily. Homodimer. Interacts with MYOB1 and MYOB7. Interacts with WIT1 and WIT2. Core component of the LINC complex which is composed of inner nuclear membrane SUN domain-containing proteins coupled to outer nuclear membrane WIP and WIT proteins. The LINC complex also involves nucleoskeletal proteins CRWN/LINC and possibly KAKU4 and the cytoskeletal myosin KAKU1.

Its subcellular location is the cytoplasm. It is found in the nucleus membrane. In terms of biological role, myosin heavy chain that is required for the cell cycle-regulated transport of various organelles and proteins for their segregation. Functions by binding with its tail domain to receptor proteins on organelles and exerting force with its N-terminal motor domain against actin filaments, thereby transporting its cargo along polarized actin cables. Involved in trafficking of Golgi stacks and mitochondria. Plays a role in nuclear shape determination. Drives nuclear movement along actin filaments. As component of the SUN-WIP-WIT2-KAKU1 complex, mediates the transfer of cytoplasmic forces to the nuclear envelope (NE), leading to nuclear shape changes. The sequence is that of Myosin-15 (XI-I) from Arabidopsis thaliana (Mouse-ear cress).